The chain runs to 411 residues: Serine hydroxymethyltransferase (411 aa).

(6S)-5,6,7,8-tetrahydrofolate is bound by residues L119 and 123-125 (GHL). N6-(pyridoxal phosphate)lysine is present on K228. 351-353 (SPF) lines the (6S)-5,6,7,8-tetrahydrofolate pocket.

It belongs to the SHMT family. As to quaternary structure, homodimer. Requires pyridoxal 5'-phosphate as cofactor.

The protein resides in the cytoplasm. It carries out the reaction (6R)-5,10-methylene-5,6,7,8-tetrahydrofolate + glycine + H2O = (6S)-5,6,7,8-tetrahydrofolate + L-serine. Its pathway is one-carbon metabolism; tetrahydrofolate interconversion. The protein operates within amino-acid biosynthesis; glycine biosynthesis; glycine from L-serine: step 1/1. In terms of biological role, catalyzes the reversible interconversion of serine and glycine with tetrahydrofolate (THF) serving as the one-carbon carrier. This reaction serves as the major source of one-carbon groups required for the biosynthesis of purines, thymidylate, methionine, and other important biomolecules. Also exhibits THF-independent aldolase activity toward beta-hydroxyamino acids, producing glycine and aldehydes, via a retro-aldol mechanism. The chain is Serine hydroxymethyltransferase from Clostridium botulinum (strain Eklund 17B / Type B).